The sequence spans 350 residues: Cell division protein ZipA (350 aa).

Over 1-6 (MEDLQL) the chain is Periplasmic. A helical transmembrane segment spans residues 7-27 (VLFVLGAIAIVAVLVHGFWSI). The Cytoplasmic portion of the chain corresponds to 28–350 (RKQQPRTIKE…QYLARIRANA (323 aa)). Disordered stretches follow at residues 36–55 (KEQPRTPYAMSPGRRDAEGF), 65–136 (VRKL…PSAR), and 187–213 (RVPADQGQAAHSAATQAEPQAKAEEPL). 2 stretches are compositionally biased toward basic and acidic residues: residues 65–109 (VRKL…ESRA) and 116–131 (AAHERRGHDFRHHEEP).

It belongs to the ZipA family. In terms of assembly, interacts with FtsZ via their C-terminal domains.

It is found in the cell inner membrane. Essential cell division protein that stabilizes the FtsZ protofilaments by cross-linking them and that serves as a cytoplasmic membrane anchor for the Z ring. Also required for the recruitment to the septal ring of downstream cell division proteins. In Shewanella amazonensis (strain ATCC BAA-1098 / SB2B), this protein is Cell division protein ZipA.